Here is a 312-residue protein sequence, read N- to C-terminus: Taste receptor type 2 member 9 (312 aa).

Over 1–9 the chain is Extracellular; the sequence is MPSAIEAIY. A helical membrane pass occupies residues 10–32; the sequence is IILIAGELTIGIWGNGFIVLVNC. Topologically, residues 33-52 are cytoplasmic; it reads XDWLKRRDISLIDIILISLA. A helical membrane pass occupies residues 53-72; sequence ISRICLLCVISLDGFFMLLF. The Extracellular segment spans residues 73–86; it reads PGTYGNSVLVSIVN. The chain crosses the membrane as a helical span at residues 87-109; the sequence is VVWTFANNSSLWFTSCLSIFYLL. The Cytoplasmic segment spans residues 110 to 128; sequence KIANISHPFFFWLKLKINK. A helical transmembrane segment spans residues 129–146; it reads VMLAILLGSFLISLIISV. Residues 147 to 180 are Extracellular-facing; sequence XKNDDMWYHLFKVSXEENITWEFKVSKIPGTFKQ. Asn164 carries N-linked (GlcNAc...) asparagine glycosylation. A helical transmembrane segment spans residues 181-203; that stretch reads LTLNLGGRVPFILCLISFFLLLF. Topologically, residues 204-234 are cytoplasmic; the sequence is SLVRHTKQIQLHATGFRDPSTEAHMRAIKAV. A helical membrane pass occupies residues 235–257; it reads IIFLLLLIVYYPVFLVMTSSALI. The Extracellular segment spans residues 258-261; the sequence is PQGK. Residues 262-284 form a helical membrane-spanning segment; sequence LVLMIGDIVTVIFPSSHSFILIM. Topologically, residues 285 to 312 are cytoplasmic; it reads GNSKLREAFLKMLRFVKGFLRRRKPFVP.

It belongs to the G-protein coupled receptor T2R family.

The protein localises to the membrane. Gustducin-coupled receptor implicated in the perception of bitter compounds in the oral cavity and the gastrointestinal tract. Signals through PLCB2 and the calcium-regulated cation channel TRPM5. The chain is Taste receptor type 2 member 9 (TAS2R9) from Pan troglodytes (Chimpanzee).